The chain runs to 896 residues: Zinc finger protein 574 (896 aa).

C2H2-type zinc fingers lie at residues 16-38, 76-98, and 126-148; these read YVCS…QNSH, YQCL…QELH, and YECV…RQTH. Serine 164 carries the post-translational modification Phosphoserine. The segment at 214–236 adopts a C2H2-type 4 zinc-finger fold; it reads YKCSECSQLFQLPADFLEHQATH. Residues 259 to 272 are compositionally biased toward low complexity; that stretch reads VEVPVSQPEPVPSS. Residues 259–303 form a disordered region; sequence VEVPVSQPEPVPSSDHSYELRNGEALGRDRRGRRARRNNSGEPGG. Over residues 274 to 287 the composition is skewed to basic and acidic residues; the sequence is HSYELRNGEALGRD. Phosphoserine is present on serine 298. C2H2-type zinc fingers lie at residues 309–331, 336–358, 364–386, and 392–413; these read LFCS…LRSH, FKCP…LGDH, FLCV…RRAH, and HSCP…RRTH. Residues 434-460 are disordered; the sequence is FPEPAPAETGEPEAPEPPVAEESSAEP. 6 consecutive C2H2-type zinc fingers follow at residues 466–489, 495–517, 523–545, 551–573, 579–601, and 607–630; these read YRCL…RFVH, HKCS…LRTH, FPCP…RLTH, YRCG…RLVH, YRCQ…RYHH, and YKCR…LVAH. The C2H2-type 15; degenerate zinc finger occupies 636 to 659; sequence HRCSSCGAAFPSSLRLREHRCAAA. The C2H2-type 16 zinc finger occupies 667-689; that stretch reads FECGTCGKKVGSAARLQAHEAAH. The tract at residues 687 to 733 is disordered; the sequence is AAHAAAGPGEVLAKEPPAPRAPRAARTPITSPTTLGSAAPAAPAAPA. Residues 707-732 are compositionally biased toward low complexity; that stretch reads APRAARTPITSPTTLGSAAPAAPAAP. Serine 717 carries the phosphoserine modification. 4 consecutive C2H2-type zinc fingers follow at residues 738–760, 766–788, 794–816, and 822–844; these read LECS…RRIH, YPCP…RRLH, FACE…RRIH, and YSCP…RKTH. At arginine 832 the chain carries Asymmetric dimethylarginine.

It belongs to the krueppel C2H2-type zinc-finger protein family.

It is found in the nucleus. In terms of biological role, may be involved in transcriptional regulation. This is Zinc finger protein 574 (ZNF574) from Bos taurus (Bovine).